A 676-amino-acid chain; its full sequence is DNA ligase (676 aa).

Residues 41–45, 90–91, and E123 each bind NAD(+); these read DLTYD and SL. The N6-AMP-lysine intermediate role is filled by K125. Residues R146, E180, K293, and K317 each contribute to the NAD(+) site. The Zn(2+) site is built by C408, C411, C424, and C429.

Belongs to the NAD-dependent DNA ligase family. LigA subfamily. The cofactor is Mg(2+). Mn(2+) is required as a cofactor.

The catalysed reaction is NAD(+) + (deoxyribonucleotide)n-3'-hydroxyl + 5'-phospho-(deoxyribonucleotide)m = (deoxyribonucleotide)n+m + AMP + beta-nicotinamide D-nucleotide.. Functionally, DNA ligase that catalyzes the formation of phosphodiester linkages between 5'-phosphoryl and 3'-hydroxyl groups in double-stranded DNA using NAD as a coenzyme and as the energy source for the reaction. It is essential for DNA replication and repair of damaged DNA. The polypeptide is DNA ligase (Borrelia turicatae (strain 91E135)).